Consider the following 411-residue polypeptide: 2,3-bisphosphoglycerate-independent phosphoglycerate mutase (411 aa).

The protein belongs to the BPG-independent phosphoglycerate mutase family. A-PGAM subfamily.

It catalyses the reaction (2R)-2-phosphoglycerate = (2R)-3-phosphoglycerate. It functions in the pathway carbohydrate degradation; glycolysis; pyruvate from D-glyceraldehyde 3-phosphate: step 3/5. Its function is as follows. Catalyzes the interconversion of 2-phosphoglycerate and 3-phosphoglycerate. The polypeptide is 2,3-bisphosphoglycerate-independent phosphoglycerate mutase (Pyrobaculum aerophilum (strain ATCC 51768 / DSM 7523 / JCM 9630 / CIP 104966 / NBRC 100827 / IM2)).